Reading from the N-terminus, the 347-residue chain is Tetraacyldisaccharide 4'-kinase (347 aa).

Residue 65–72 (FVGGTGKT) coordinates ATP.

This sequence belongs to the LpxK family.

The enzyme catalyses a lipid A disaccharide + ATP = a lipid IVA + ADP + H(+). It functions in the pathway glycolipid biosynthesis; lipid IV(A) biosynthesis; lipid IV(A) from (3R)-3-hydroxytetradecanoyl-[acyl-carrier-protein] and UDP-N-acetyl-alpha-D-glucosamine: step 6/6. Its function is as follows. Transfers the gamma-phosphate of ATP to the 4'-position of a tetraacyldisaccharide 1-phosphate intermediate (termed DS-1-P) to form tetraacyldisaccharide 1,4'-bis-phosphate (lipid IVA). In Janthinobacterium sp. (strain Marseille) (Minibacterium massiliensis), this protein is Tetraacyldisaccharide 4'-kinase.